A 313-amino-acid chain; its full sequence is Intelectin-1b (313 aa).

The N-terminal stretch at 1–19 is a signal peptide; it reads MTQLGFLLFIMIATRVCSA. Residues 32-251 enclose the Fibrinogen C-terminal domain; sequence SFFSSLPRSC…NNERAASALC (220 aa). Cysteines 41 and 70 form a disulfide. Ca(2+)-binding residues include His86, Glu87, Asn89, Gly92, Gly97, Asp98, and Asp133. Cystine bridges form between Cys94/Cys280, Cys199/Cys259, and Cys251/Cys265. Residue Asn163 is glycosylated (N-linked (GlcNAc...) asparagine). 4 residues coordinate Ca(2+): Asn260, Glu262, Glu274, and Asp282. A carbohydrate-binding positions include 262–263 and Glu274; that span reads EH. The GPI-anchor amidated serine moiety is linked to residue Ser298. Residues 299 to 313 constitute a propeptide that is removed on maturation; the sequence is NSREITEAAVLLFYR.

As to expression, expressed in the globlet and Paneth cells of the small intestine of infected mice. Expressed in the ileum of uninfected mice.

The protein localises to the cell membrane. The protein resides in the secreted. In terms of biological role, may play a protective role in the innate immune response to parasite infection. The chain is Intelectin-1b (Itln1b) from Mus musculus (Mouse).